We begin with the raw amino-acid sequence, 55 residues long: Large ribosomal subunit protein bL33 (55 aa).

Belongs to the bacterial ribosomal protein bL33 family.

The sequence is that of Large ribosomal subunit protein bL33 from Rhizobium etli (strain CIAT 652).